A 596-amino-acid chain; its full sequence is Lamin-B2 (596 aa).

Residues 1 to 20 (MASLPPHAGPATPLSPTRLS) are disordered. Positions 1-26 (MASLPPHAGPATPLSPTRLSRLQEKE) are head. Threonine 12 bears the Phosphothreonine mark. Serine 15 is modified (phosphoserine). The IF rod domain occupies 24–380 (EKEELRELND…KLLEGEEERL (357 aa)). The tract at residues 27–61 (ELRELNDRLAHYIDRVRALELENDRLLLRISEKEE) is coil 1A. N6-acetyllysine; alternate is present on lysine 59. Lysine 59 is covalently cross-linked (Glycyl lysine isopeptide (Lys-Gly) (interchain with G-Cter in SUMO2); alternate). The segment at 62-73 (VTTREVSGIKTL) is linker 1. Positions 74–207 (YESELADARR…AFSKSVFEEE (134 aa)) are coil 1B. Residues lysine 173 and lysine 233 each participate in a glycyl lysine isopeptide (Lys-Gly) (interchain with G-Cter in SUMO2) cross-link. Residues 208 to 234 (VRETRRRHERRLVEVDSSRQQEYDFKM) are linker 2. Residues 235–378 (AQALEDLRSQ…YRKLLEGEEE (144 aa)) are coil 2. Phosphoserine is present on residues serine 294 and serine 385. The interval 376–440 (EEERLKLSPS…ASRVSSGSRL (65 aa)) is disordered. Residues 379-596 (RLKLSPSPSS…RTTSRGCRLM (218 aa)) form a tail region. Low complexity predominate over residues 382-403 (LSPSPSSRITISRATSSSSSSS). O-linked (GlcNAc) threonine glycosylation is present at threonine 391. 3 positions are modified to phosphoserine: serine 398, serine 400, and serine 402. Arginine 413 is modified (omega-N-methylarginine). The Nuclear localization signal motif lies at 415-420 (KRRRLE). Low complexity predominate over residues 425 to 439 (SGSPSRASRVSSGSR). The 122-residue stretch at 438–559 (SRLAQQTVAT…VKAAKHSSVQ (122 aa)) folds into the LTD domain. Residue lysine 465 forms a Glycyl lysine isopeptide (Lys-Gly) (interchain with G-Cter in SUMO2) linkage. At serine 473 the chain carries Phosphoserine. The disordered stretch occupies residues 552 to 596 (AAKHSSVQGRENGEEEEEEEAEFGEEDLFHQQGDPRTTSRGCRLM). Over residues 564–577 (GEEEEEEEAEFGEE) the composition is skewed to acidic residues. Residues 585-596 (DPRTTSRGCRLM) show a composition bias toward polar residues. Cysteine 593 is subject to Cysteine methyl ester. Cysteine 593 carries the S-farnesyl cysteine lipid modification. A propeptide spans 594–596 (RLM) (removed in mature form).

This sequence belongs to the intermediate filament family. Dimer. Lamin dimers then assemble into dimeric head-to-tail polymers. Ultimately, two head-to-tail polymers assemble laterally into a protofilament with a uniformly shaped rod of 3.5 nm in diameter. Interacts with TMEM43. B-type lamins undergo a series of modifications, such as farnesylation and phosphorylation. Increased phosphorylation of the lamins occurs before envelope disintegration and probably plays a role in regulating lamin associations. Post-translationally, phosphorylation plays a key role in lamin organization, subcellular localization and nuclear envelope disintegration. Phosphorylation by CDK1 at Ser-15 and Ser-385 at the onset of mitosis drives lamin disassembly and nuclear envelope breakdown. In terms of tissue distribution, germ cell-specific.

The protein resides in the nucleus lamina. Functionally, lamins are intermediate filament proteins that assemble into a filamentous meshwork, and which constitute the major components of the nuclear lamina, a fibrous layer on the nucleoplasmic side of the inner nuclear membrane. Lamins provide a framework for the nuclear envelope, bridging the nuclear envelope and chromatin, thereby playing an important role in nuclear assembly, chromatin organization, nuclear membrane and telomere dynamics. The structural integrity of the lamina is strictly controlled by the cell cycle, as seen by the disintegration and formation of the nuclear envelope in prophase and telophase, respectively. This chain is Lamin-B2 (Lmnb2), found in Mus musculus (Mouse).